Reading from the N-terminus, the 244-residue chain is 5-oxoprolinase subunit A (244 aa).

This sequence belongs to the LamB/PxpA family. In terms of assembly, forms a complex composed of PxpA, PxpB and PxpC.

It catalyses the reaction 5-oxo-L-proline + ATP + 2 H2O = L-glutamate + ADP + phosphate + H(+). Functionally, catalyzes the cleavage of 5-oxoproline to form L-glutamate coupled to the hydrolysis of ATP to ADP and inorganic phosphate. The polypeptide is 5-oxoprolinase subunit A (Escherichia fergusonii (strain ATCC 35469 / DSM 13698 / CCUG 18766 / IAM 14443 / JCM 21226 / LMG 7866 / NBRC 102419 / NCTC 12128 / CDC 0568-73)).